Here is a 380-residue protein sequence, read N- to C-terminus: Queuine tRNA-ribosyltransferase (380 aa).

Residue aspartate 95 is the Proton acceptor of the active site. Substrate contacts are provided by residues 95–99 (DSGGF), aspartate 149, glutamine 192, and glycine 219. The interval 250–256 (GVGSPDA) is RNA binding. Aspartate 269 (nucleophile) is an active-site residue. The interval 274 to 278 (TRIAR) is RNA binding; important for wobble base 34 recognition. Zn(2+) is bound by residues cysteine 307, cysteine 309, cysteine 312, and histidine 338.

It belongs to the queuine tRNA-ribosyltransferase family. Homodimer. Within each dimer, one monomer is responsible for RNA recognition and catalysis, while the other monomer binds to the replacement base PreQ1. Zn(2+) is required as a cofactor.

It carries out the reaction 7-aminomethyl-7-carbaguanine + guanosine(34) in tRNA = 7-aminomethyl-7-carbaguanosine(34) in tRNA + guanine. It participates in tRNA modification; tRNA-queuosine biosynthesis. Catalyzes the base-exchange of a guanine (G) residue with the queuine precursor 7-aminomethyl-7-deazaguanine (PreQ1) at position 34 (anticodon wobble position) in tRNAs with GU(N) anticodons (tRNA-Asp, -Asn, -His and -Tyr). Catalysis occurs through a double-displacement mechanism. The nucleophile active site attacks the C1' of nucleotide 34 to detach the guanine base from the RNA, forming a covalent enzyme-RNA intermediate. The proton acceptor active site deprotonates the incoming PreQ1, allowing a nucleophilic attack on the C1' of the ribose to form the product. After dissociation, two additional enzymatic reactions on the tRNA convert PreQ1 to queuine (Q), resulting in the hypermodified nucleoside queuosine (7-(((4,5-cis-dihydroxy-2-cyclopenten-1-yl)amino)methyl)-7-deazaguanosine). This chain is Queuine tRNA-ribosyltransferase, found in Latilactobacillus sakei subsp. sakei (strain 23K) (Lactobacillus sakei subsp. sakei).